The chain runs to 313 residues: Ribosomal protein L11 methyltransferase (313 aa).

S-adenosyl-L-methionine is bound by residues threonine 164, glycine 185, aspartate 207, and asparagine 249.

This sequence belongs to the methyltransferase superfamily. PrmA family.

It localises to the cytoplasm. The catalysed reaction is L-lysyl-[protein] + 3 S-adenosyl-L-methionine = N(6),N(6),N(6)-trimethyl-L-lysyl-[protein] + 3 S-adenosyl-L-homocysteine + 3 H(+). Functionally, methylates ribosomal protein L11. The chain is Ribosomal protein L11 methyltransferase from Clostridium perfringens (strain ATCC 13124 / DSM 756 / JCM 1290 / NCIMB 6125 / NCTC 8237 / Type A).